A 334-amino-acid chain; its full sequence is N-acetylmuramoyl-L-alanine amidase sle1 (334 aa).

The N-terminal stretch at 1–25 (MQKKVIAAIIGTSAISAVAATQANA) is a signal peptide. Positions 27–70 (TTHTVKPGESVWAISNKYGISIAKLKSLNNLTSNLIFPNQVLKV) constitute a LysM 1 domain. Residues 71–86 (SGSSNSTSNSSRPSTN) are compositionally biased toward low complexity. The segment at 71–90 (SGSSNSTSNSSRPSTNSGGG) is disordered. LysM domains lie at 91–134 (SYYT…KLKV) and 158–201 (SYYT…KLKV). Positions 210–334 (GSATTTNRGY…YQVNNYRYIH (125 aa)) constitute a Peptidase C51 domain.

The protein resides in the secreted. It is found in the cell surface. It carries out the reaction Hydrolyzes the link between N-acetylmuramoyl residues and L-amino acid residues in certain cell-wall glycopeptides.. Functionally, peptidoglycan hydrolase involved in the splitting of the septum during cell division. This is N-acetylmuramoyl-L-alanine amidase sle1 (sle1) from Staphylococcus aureus (strain USA300).